Here is a 468-residue protein sequence, read N- to C-terminus: MQWNGVRRAHSIWCKRLTNNTHLHHPSIPVSHFFTMSSLEEPLSFDKLPSMSTMDRIQRFSSGACRPRDDVGMGHRWIEGRDCTTSNSCIDDDKSFAKESFPWRRHTRKLSEGEHMFRNISFAGRTSTVSGTLRESKSFKEQKYSTFSNENGTSHISNKISKGIPKFVKIVEVGPRDGLQNEKNIVPTSVKVELIQRLVSSGLPVVEATSFVSPKWVPQLADAKDVMDAVNTLDGARLPVLTPNLKGFQAAVSAGAKEVAIFASASESFSLSNINCTIEESLLRYRVVATAAKEHSVPVRGYVSCVVGCPVEGPVLPSKVAYVVKELYDMGCFEISLGDTIGIGTPGSVVPMLEAVMAVVPADKLAVHFHDTYGQALANILVSLQMGISIVDSSIAGLGGCPYAKGASGNVATEDVVYMLNGLGVHTNVDLGKLIAAGDFISKHLGRPNGSKAAVALNRRITADASKI.

A Pyruvate carboxyltransferase domain is found at Val168–Ile435. Position 176 (Arg176) interacts with substrate. A divalent metal cation-binding residues include Asp177, His368, and His370. Residue Cys401 is part of the active site. Residue Asn410 coordinates a divalent metal cation.

Belongs to the HMG-CoA lyase family. Homodimer. A divalent metal cation is required as a cofactor.

Its subcellular location is the mitochondrion matrix. It carries out the reaction (3S)-3-hydroxy-3-methylglutaryl-CoA = acetoacetate + acetyl-CoA. Its pathway is metabolic intermediate metabolism; (S)-3-hydroxy-3-methylglutaryl-CoA degradation; acetoacetate from (S)-3-hydroxy-3-methylglutaryl-CoA: step 1/1. Functionally, involved in the catabolism of branched amino acids such as leucine. The polypeptide is Hydroxymethylglutaryl-CoA lyase, mitochondrial (HMGCL) (Arabidopsis thaliana (Mouse-ear cress)).